Consider the following 308-residue polypeptide: Probable manganese-dependent inorganic pyrophosphatase (308 aa).

The Mn(2+) site is built by His9, Asp13, Asp15, Asp74, His96, and Asp148.

The protein belongs to the PPase class C family. The cofactor is Mn(2+).

It localises to the cytoplasm. It catalyses the reaction diphosphate + H2O = 2 phosphate + H(+). This chain is Probable manganese-dependent inorganic pyrophosphatase, found in Oceanobacillus iheyensis (strain DSM 14371 / CIP 107618 / JCM 11309 / KCTC 3954 / HTE831).